Consider the following 171-residue polypeptide: MKRTKKYPFLTLQRQRFHLNFENASSAAGIPAERDFYRWAWSALKSGYRRADISLILLDEEEARAYNRDYRGKDYATNVLSFALNEGEILPCQVSEKLYGDLIICPQVVLKEAAEQGKTPERHFAHLTIHGVLHLMGYDHIEDDEAEIMEAEEIRLMLAAGFPNPYQEDGH.

Zn(2+) is bound by residues histidine 130, histidine 134, and histidine 140.

The protein belongs to the endoribonuclease YbeY family. The cofactor is Zn(2+).

Its subcellular location is the cytoplasm. Its function is as follows. Single strand-specific metallo-endoribonuclease involved in late-stage 70S ribosome quality control and in maturation of the 3' terminus of the 16S rRNA. This chain is Endoribonuclease YbeY, found in Neisseria meningitidis serogroup A / serotype 4A (strain DSM 15465 / Z2491).